Consider the following 641-residue polypeptide: 1-phosphatidylinositol 4,5-bisphosphate phosphodiesterase zeta-1 (641 aa).

The EF-hand domain maps to 35–70; the sequence is CSYIHVKRIFKDNDRLKQGRITIEEFRAIYRILTHR. Positions 155-299 constitute a PI-PLC X-box domain; that stretch reads QDMTHPLNDY…LKFKVLVKNK (145 aa). Active-site residues include His-170 and His-215. Positions 382-498 constitute a PI-PLC Y-box domain; the sequence is LSDLVIYTKA…GYILKPHFLR (117 aa). Positions 498–622 constitute a C2 domain; that stretch reads RESESYFNPS…KGYRRVPLFS (125 aa).

Interacts via its C2 domain with PtdIns(3)P and, to a lesser extent, PtdIns(5)P in vitro. The cofactor is Ca(2+).

Its subcellular location is the nucleus. It localises to the cytoplasm. It is found in the perinuclear region. The enzyme catalyses a 1,2-diacyl-sn-glycero-3-phospho-(1D-myo-inositol-4,5-bisphosphate) + H2O = 1D-myo-inositol 1,4,5-trisphosphate + a 1,2-diacyl-sn-glycerol + H(+). In terms of biological role, the production of the second messenger molecules diacylglycerol (DAG) and inositol 1,4,5-trisphosphate (IP3) is mediated by activated phosphatidylinositol-specific phospholipase C enzymes. In vitro, hydrolyzes PtdIns(4,5)P2 in a Ca(2+)-dependent manner. Triggers intracellular Ca(2+) oscillations in oocytes solely during M phase and is involved in inducing oocyte activation and initiating embryonic development up to the blastocyst stage. Is therefore a strong candidate for the egg-activating soluble sperm factor that is transferred from the sperm into the egg cytoplasm following gamete membrane fusion. May exert an inhibitory effect on phospholipase-C-coupled processes that depend on calcium ions and protein kinase C, including CFTR trafficking and function. This is 1-phosphatidylinositol 4,5-bisphosphate phosphodiesterase zeta-1 from Macaca fascicularis (Crab-eating macaque).